The sequence spans 426 residues: MSKSENLYSAARELIPGGVNSPVRAFTGVGGTPLFIEKADGAYLYDVDGKAYIDYVGSWGPMVLGHNHPAIRNAVIEAAERGLSFGAPTEMEVKMAQLVTELVPTMDMVRMVNSGTEATMSAIRLARGFTGRDKIIKFEGCYHGHADCLLVKAGSGALTLGQPNSPGVPADFAKHTLTCTYNDLASVRAAFEQYPQEIACIIVEPVAGNMNCVPPLPDFLPGLRALCDEFGALLIIDEVMTGFRVALAGAQDYYGVEPDLTCLGKIIGGGMPVGAFGGRRDVMDALAPTGPVYQAGTLSGNPIAMAAGFACLNEVAQPGVHETLDELTTRLAEGLLEAAEEAGIPLVVNHVGGMFGIFFTDAESVTCYQDVMACDVERFKRFFHMMLDEGVYLAPSAFEAGFMSVAHSMEDINNTIDAARRVFAKL.

Lysine 265 carries the N6-(pyridoxal phosphate)lysine modification.

Belongs to the class-III pyridoxal-phosphate-dependent aminotransferase family. HemL subfamily. As to quaternary structure, homodimer. It depends on pyridoxal 5'-phosphate as a cofactor.

Its subcellular location is the cytoplasm. The catalysed reaction is (S)-4-amino-5-oxopentanoate = 5-aminolevulinate. It participates in porphyrin-containing compound metabolism; protoporphyrin-IX biosynthesis; 5-aminolevulinate from L-glutamyl-tRNA(Glu): step 2/2. The chain is Glutamate-1-semialdehyde 2,1-aminomutase from Escherichia coli O157:H7.